Consider the following 102-residue polypeptide: RNA-binding protein Hfq (102 aa).

The 60-residue stretch at 9-68 folds into the Sm domain; that stretch reads DPFLNALRRERVPVSIYLVNGIKLQGQIESFDQFVILLKNTVSQMVYKHAISTVVPSRPV. The disordered stretch occupies residues 63-102; that stretch reads VPSRPVSHHSNNAGGGSSNYHHGGSAQGSSAPQQDSDDAE. Residues 70 to 86 are compositionally biased toward low complexity; it reads HHSNNAGGGSSNYHHGG.

The protein belongs to the Hfq family. Homohexamer.

In terms of biological role, RNA chaperone that binds small regulatory RNA (sRNAs) and mRNAs to facilitate mRNA translational regulation in response to envelope stress, environmental stress and changes in metabolite concentrations. Also binds with high specificity to tRNAs. The sequence is that of RNA-binding protein Hfq from Klebsiella pneumoniae (strain 342).